The sequence spans 152 residues: Transcriptional regulator MraZ (152 aa).

SpoVT-AbrB domains lie at 7 to 51 (KERH…APDR) and 89 to 132 (LEMV…DPQR).

The protein belongs to the MraZ family. In terms of assembly, forms oligomers.

The protein resides in the cytoplasm. It localises to the nucleoid. In Pelodictyon phaeoclathratiforme (strain DSM 5477 / BU-1), this protein is Transcriptional regulator MraZ.